The chain runs to 331 residues: MEVNQKWNWDTKPILVKCGGFSSQLAKNVTEKVDGDPLWGSRFDATNPEAVIQTHLDFLRNGADIILTNTYQSSVEGFVKYLGVTRERGVELIQKSVQLAKQAKEQYLSEIGSEAESALPLIMGSIGPYGAYLHDGSEYTGNYADKMSKEELRAWHKTRIEICLAAGVDGLALETLPCLMEAEAVTELVLDNFPDAKFWVSLQCMDEKHMASGENFAEAALSLWRLVQSRKAENRLLGIGLNCVNPLFVTPLLSSLTKVAGSDRIPLVVYSNRGEIYDVEQGDWTGTGEEVVKFVPEWIQLGVRIVGGCCRVYPTDVLAIRKYVDGLNIKP.

The Hcy-binding domain occupies 3-324 (VNQKWNWDTK…TDVLAIRKYV (322 aa)). Positions 243, 309, and 310 each coordinate Zn(2+).

Belongs to the Betaine-homocysteine S-methyltransferase, BHMT family. Requires Zn(2+) as cofactor.

It carries out the reaction L-homocysteine + glycine betaine = N,N-dimethylglycine + L-methionine. It participates in amino-acid biosynthesis; L-methionine biosynthesis via de novo pathway. In terms of biological role, involved in the regulation of homocysteine metabolism. Converts betaine and homocysteine to dimethylglycine and methionine, respectively. This is Betaine-homocysteine S-methyltransferase from Drosophila melanogaster (Fruit fly).